The following is a 202-amino-acid chain: Oligoribonuclease (202 aa).

Residues 2-166 enclose the Exonuclease domain; that stretch reads LVWIDCEMTG…ADIQESIEEL (165 aa). Tyrosine 123 is an active-site residue.

The protein belongs to the oligoribonuclease family.

The protein localises to the cytoplasm. Functionally, 3'-to-5' exoribonuclease specific for small oligoribonucleotides. The polypeptide is Oligoribonuclease (Cutibacterium acnes (strain DSM 16379 / KPA171202) (Propionibacterium acnes)).